The chain runs to 343 residues: MAAEKLRRGEDLTLEEAHDAASGMLGGMGTDESAELLSLLARKGETDEELLGVLEAVSEHSERVVPRNSGTVIDVCGTGGDGMSTLNVSTACAFVAAASGCTVAKHGNRSSSGCSGSADIFERLGCDLDQRPGDAASLLEDLNICFMYAPRYHPALAGIADARKKVGGRTVFNLVGPLCNPAGVRDQLVGVSSQDLLGRIPRILHRRGAGSAMAVMSDDGMDELSTSSHGSACILRGGEVYTERVDPEALGLHASSANELRIHSAGGAFHSFVAVLDGRAGRAMAETVELNAAAALVVGGISEGLADGIEAARVAIEGGAASDLLDRFVAKAGDPGMLREARE.

5-phospho-alpha-D-ribose 1-diphosphate-binding positions include Gly-77, 80–81 (GD), Thr-85, 87–90 (NVST), 105–113 (KHGNRSSSG), and Ser-117. Gly-77 is a binding site for anthranilate. Residue Ser-89 coordinates Mg(2+). Asn-108 contributes to the anthranilate binding site. Arg-163 is a binding site for anthranilate. The Mg(2+) site is built by Asp-222 and Glu-223.

Belongs to the anthranilate phosphoribosyltransferase family. As to quaternary structure, homodimer. Requires Mg(2+) as cofactor.

The enzyme catalyses N-(5-phospho-beta-D-ribosyl)anthranilate + diphosphate = 5-phospho-alpha-D-ribose 1-diphosphate + anthranilate. It functions in the pathway amino-acid biosynthesis; L-tryptophan biosynthesis; L-tryptophan from chorismate: step 2/5. Catalyzes the transfer of the phosphoribosyl group of 5-phosphorylribose-1-pyrophosphate (PRPP) to anthranilate to yield N-(5'-phosphoribosyl)-anthranilate (PRA). This is Anthranilate phosphoribosyltransferase from Cenarchaeum symbiosum (strain A).